The primary structure comprises 157 residues: Small ribosomal subunit protein uS7 (157 aa).

It belongs to the universal ribosomal protein uS7 family. Part of the 30S ribosomal subunit. Contacts proteins S9 and S11.

Functionally, one of the primary rRNA binding proteins, it binds directly to 16S rRNA where it nucleates assembly of the head domain of the 30S subunit. Is located at the subunit interface close to the decoding center, probably blocks exit of the E-site tRNA. The sequence is that of Small ribosomal subunit protein uS7 from Roseiflexus sp. (strain RS-1).